The following is a 428-amino-acid chain: Gamma-glutamyl phosphate reductase (428 aa).

Belongs to the gamma-glutamyl phosphate reductase family.

The protein resides in the cytoplasm. The catalysed reaction is L-glutamate 5-semialdehyde + phosphate + NADP(+) = L-glutamyl 5-phosphate + NADPH + H(+). The protein operates within amino-acid biosynthesis; L-proline biosynthesis; L-glutamate 5-semialdehyde from L-glutamate: step 2/2. In terms of biological role, catalyzes the NADPH-dependent reduction of L-glutamate 5-phosphate into L-glutamate 5-semialdehyde and phosphate. The product spontaneously undergoes cyclization to form 1-pyrroline-5-carboxylate. This Streptomyces coelicolor (strain ATCC BAA-471 / A3(2) / M145) protein is Gamma-glutamyl phosphate reductase.